Consider the following 182-residue polypeptide: Putative pre-16S rRNA nuclease (182 aa).

It belongs to the YqgF nuclease family.

The protein resides in the cytoplasm. Could be a nuclease involved in processing of the 5'-end of pre-16S rRNA. This Corynebacterium glutamicum (strain ATCC 13032 / DSM 20300 / JCM 1318 / BCRC 11384 / CCUG 27702 / LMG 3730 / NBRC 12168 / NCIMB 10025 / NRRL B-2784 / 534) protein is Putative pre-16S rRNA nuclease.